The following is a 522-amino-acid chain: Protein nucleotidyltransferase YdiU (522 aa).

8 residues coordinate ATP: G109, G111, R112, K132, D144, G145, R195, and R202. D271 functions as the Proton acceptor in the catalytic mechanism. Mg(2+)-binding residues include N272 and D281. Position 281 (D281) interacts with ATP.

Belongs to the SELO family. Mg(2+) is required as a cofactor. Mn(2+) serves as cofactor.

The catalysed reaction is L-seryl-[protein] + ATP = 3-O-(5'-adenylyl)-L-seryl-[protein] + diphosphate. It carries out the reaction L-threonyl-[protein] + ATP = 3-O-(5'-adenylyl)-L-threonyl-[protein] + diphosphate. It catalyses the reaction L-tyrosyl-[protein] + ATP = O-(5'-adenylyl)-L-tyrosyl-[protein] + diphosphate. The enzyme catalyses L-histidyl-[protein] + UTP = N(tele)-(5'-uridylyl)-L-histidyl-[protein] + diphosphate. The catalysed reaction is L-seryl-[protein] + UTP = O-(5'-uridylyl)-L-seryl-[protein] + diphosphate. It carries out the reaction L-tyrosyl-[protein] + UTP = O-(5'-uridylyl)-L-tyrosyl-[protein] + diphosphate. Functionally, nucleotidyltransferase involved in the post-translational modification of proteins. It can catalyze the addition of adenosine monophosphate (AMP) or uridine monophosphate (UMP) to a protein, resulting in modifications known as AMPylation and UMPylation. This Burkholderia ambifaria (strain ATCC BAA-244 / DSM 16087 / CCUG 44356 / LMG 19182 / AMMD) (Burkholderia cepacia (strain AMMD)) protein is Protein nucleotidyltransferase YdiU.